The chain runs to 419 residues: Enolase (419 aa).

Glutamine 160 is a binding site for (2R)-2-phosphoglycerate. Glutamate 204 (proton donor) is an active-site residue. Mg(2+) contacts are provided by aspartate 240, glutamate 283, and aspartate 309. (2R)-2-phosphoglycerate is bound by residues lysine 334, arginine 363, serine 364, and lysine 385. The Proton acceptor role is filled by lysine 334.

This sequence belongs to the enolase family. Mg(2+) is required as a cofactor.

The protein localises to the cytoplasm. The protein resides in the secreted. It localises to the cell surface. It carries out the reaction (2R)-2-phosphoglycerate = phosphoenolpyruvate + H2O. Its pathway is carbohydrate degradation; glycolysis; pyruvate from D-glyceraldehyde 3-phosphate: step 4/5. Functionally, catalyzes the reversible conversion of 2-phosphoglycerate (2-PG) into phosphoenolpyruvate (PEP). It is essential for the degradation of carbohydrates via glycolysis. The polypeptide is Enolase (Pyrobaculum aerophilum (strain ATCC 51768 / DSM 7523 / JCM 9630 / CIP 104966 / NBRC 100827 / IM2)).